We begin with the raw amino-acid sequence, 404 residues long: Major outer membrane porin (404 aa).

The N-terminal stretch at 1-22 is a signal peptide; sequence MKKLLKSVLAFAVLGSASSLHA. The tract at residues 85 to 110 is disordered; sequence GPVPTTTDTDAAADITTSTPRENPAY. Residues 89–103 are compositionally biased toward low complexity; the sequence is TTTDTDAAADITTST.

The protein belongs to the chlamydial porin (CP) (TC 1.B.2) family. As to quaternary structure, part of a disulfide cross-linked outer membrane complex (COMC) composed of the major outer membrane porin (MOMP), the small cysteine-rich protein (OmcA) and the large cysteine-rich periplasmic protein (OmcB).

It localises to the cell outer membrane. In terms of biological role, in elementary bodies (EBs, the infectious stage, which is able to survive outside the host cell) provides the structural integrity of the outer envelope through disulfide cross-links with the small cysteine-rich protein and the large cysteine-rich periplasmic protein. It has been described in publications as the Sarkosyl-insoluble COMC (Chlamydia outer membrane complex), and serves as the functional equivalent of peptidoglycan. Its function is as follows. Permits diffusion of specific solutes through the outer membrane. The protein is Major outer membrane porin (ompA) of Chlamydia muridarum.